The following is a 542-amino-acid chain: Chaperonin GroEL 2 (542 aa).

ATP contacts are provided by residues T30 to P33, K51, D87 to T91, G415, and D496.

Belongs to the chaperonin (HSP60) family. Forms a cylinder of 14 subunits composed of two heptameric rings stacked back-to-back. Interacts with the co-chaperonin GroES.

It is found in the cytoplasm. The enzyme catalyses ATP + H2O + a folded polypeptide = ADP + phosphate + an unfolded polypeptide.. Together with its co-chaperonin GroES, plays an essential role in assisting protein folding. The GroEL-GroES system forms a nano-cage that allows encapsulation of the non-native substrate proteins and provides a physical environment optimized to promote and accelerate protein folding. The polypeptide is Chaperonin GroEL 2 (Rhizobium etli (strain ATCC 51251 / DSM 11541 / JCM 21823 / NBRC 15573 / CFN 42)).